The chain runs to 95 residues: Large ribosomal subunit protein uL23 (95 aa).

This sequence belongs to the universal ribosomal protein uL23 family. As to quaternary structure, part of the 50S ribosomal subunit. Contacts protein L29, and trigger factor when it is bound to the ribosome.

Functionally, one of the early assembly proteins it binds 23S rRNA. One of the proteins that surrounds the polypeptide exit tunnel on the outside of the ribosome. Forms the main docking site for trigger factor binding to the ribosome. In Desulforudis audaxviator (strain MP104C), this protein is Large ribosomal subunit protein uL23.